A 124-amino-acid polypeptide reads, in one-letter code: Fluoride-specific ion channel FluC (124 aa).

A run of 4 helical transmembrane segments spans residues 4-24, 36-56, 63-83, and 100-120; these read YLVI…TGVY, GTLI…ILFL, PLWR…LSSI, and LLNI…GIVL. Residues glycine 75 and threonine 78 each coordinate Na(+).

The protein belongs to the fluoride channel Fluc/FEX (TC 1.A.43) family.

The protein localises to the cell inner membrane. The catalysed reaction is fluoride(in) = fluoride(out). Its activity is regulated as follows. Na(+) is not transported, but it plays an essential structural role and its presence is essential for fluoride channel function. Its function is as follows. Fluoride-specific ion channel. Important for reducing fluoride concentration in the cell, thus reducing its toxicity. The sequence is that of Fluoride-specific ion channel FluC from Sulfurihydrogenibium sp. (strain YO3AOP1).